Here is a 271-residue protein sequence, read N- to C-terminus: Orotidine 5'-phosphate decarboxylase (271 aa).

Lys97 functions as the Proton donor in the catalytic mechanism.

Belongs to the OMP decarboxylase family. Type 2 subfamily.

The enzyme catalyses orotidine 5'-phosphate + H(+) = UMP + CO2. Its pathway is pyrimidine metabolism; UMP biosynthesis via de novo pathway; UMP from orotate: step 2/2. The polypeptide is Orotidine 5'-phosphate decarboxylase (Leptospira borgpetersenii serovar Hardjo-bovis (strain JB197)).